A 36-amino-acid polypeptide reads, in one-letter code: Photosystem II reaction center protein M (36 aa).

The residue at position 1 (methionine 1) is a Blocked amino end (Met). Over 1-11 the chain is Lumenal; sequence MEVNQLGFIAT. A helical membrane pass occupies residues 12-27; the sequence is ALFVLVPSVFLIILYV. Over 28-36 the chain is Cytoplasmic; that stretch reads QTESQQKSS.

Belongs to the PsbM family. As to quaternary structure, PSII is composed of 1 copy each of membrane proteins PsbA, PsbB, PsbC, PsbD, PsbE, PsbF, PsbH, PsbI, PsbJ, PsbK, PsbL, PsbM, PsbT, PsbX, PsbY, PsbZ, Psb30/Ycf12, peripheral proteins PsbO, CyanoQ (PsbQ), PsbU, PsbV, PsbU, PsbV and a large number of cofactors. It forms dimeric complexes. PSII binds multiple chlorophylls, carotenoids and specific lipids. serves as cofactor.

Its subcellular location is the cellular thylakoid membrane. In terms of biological role, one of the components of the core complex of photosystem II (PSII). PSII is a light-driven water:plastoquinone oxidoreductase that uses light energy to abstract electrons from H(2)O, generating O(2) and a proton gradient subsequently used for ATP formation. It consists of a core antenna complex that captures photons, and an electron transfer chain that converts photonic excitation into a charge separation. This subunit is found at the monomer-monomer interface. Probably involved in dimerization of PSII; at the monomer-monomer interface the only protein-protein contacts observed are between the 2 PsbM subunits. Lipids, chlorophylls and carotenoids contribute strongly to PSII dimerization. The protein is Photosystem II reaction center protein M of Thermostichus vulcanus (Synechococcus vulcanus).